Consider the following 557-residue polypeptide: Probable serine/threonine-protein kinase WNK7 (557 aa).

A Protein kinase domain is found at 28–285 (IRYKEVIGKG…AEELLLDSFL (258 aa)). ATP-binding positions include 108–111 (TELF) and Lys-158. Asp-175 (proton acceptor) is an active-site residue. The segment covering 451 to 477 (QNQSSKDNHQNGASSQAGESISHSLSS) has biased composition (polar residues). The interval 451–517 (QNQSSKDNHQ…EEEEDERLKE (67 aa)) is disordered. Ser-505 bears the Phosphoserine mark.

The protein belongs to the protein kinase superfamily. Ser/Thr protein kinase family. WNK subfamily.

It carries out the reaction L-seryl-[protein] + ATP = O-phospho-L-seryl-[protein] + ADP + H(+). The catalysed reaction is L-threonyl-[protein] + ATP = O-phospho-L-threonyl-[protein] + ADP + H(+). Its function is as follows. May regulate flowering time by modulating the photoperiod pathway. The chain is Probable serine/threonine-protein kinase WNK7 (WNK7) from Arabidopsis thaliana (Mouse-ear cress).